We begin with the raw amino-acid sequence, 351 residues long: Anthranilate phosphoribosyltransferase (351 aa).

5-phospho-alpha-D-ribose 1-diphosphate is bound by residues Gly-90, Gly-93 to Asp-94, Thr-98, Asn-100 to Thr-103, Lys-118 to Gly-126, and Ser-130. Gly-90 is an anthranilate binding site. Ser-102 provides a ligand contact to Mg(2+). Asn-121 provides a ligand contact to anthranilate. Position 176 (Arg-176) interacts with anthranilate. Positions 235 and 236 each coordinate Mg(2+).

This sequence belongs to the anthranilate phosphoribosyltransferase family. Homodimer. Mg(2+) serves as cofactor.

It carries out the reaction N-(5-phospho-beta-D-ribosyl)anthranilate + diphosphate = 5-phospho-alpha-D-ribose 1-diphosphate + anthranilate. Its pathway is amino-acid biosynthesis; L-tryptophan biosynthesis; L-tryptophan from chorismate: step 2/5. Catalyzes the transfer of the phosphoribosyl group of 5-phosphorylribose-1-pyrophosphate (PRPP) to anthranilate to yield N-(5'-phosphoribosyl)-anthranilate (PRA). The polypeptide is Anthranilate phosphoribosyltransferase (Prochlorococcus marinus (strain MIT 9313)).